The following is a 460-amino-acid chain: GTPase Der (460 aa).

EngA-type G domains follow at residues 3 to 167 (FTIA…PEPT) and 189 to 364 (IRVA…AIWN). GTP is bound by residues 9 to 16 (GRPNVGKS), 56 to 60 (DTAGL), 119 to 122 (NKSE), 195 to 202 (GRPNAGKS), 242 to 246 (DTAGL), and 307 to 310 (NKWD). The KH-like domain maps to 365 to 449 (RRVPTAALNR…PIRITLREKA (85 aa)).

This sequence belongs to the TRAFAC class TrmE-Era-EngA-EngB-Septin-like GTPase superfamily. EngA (Der) GTPase family. As to quaternary structure, associates with the 50S ribosomal subunit.

In terms of biological role, GTPase that plays an essential role in the late steps of ribosome biogenesis. The protein is GTPase Der of Nitrobacter hamburgensis (strain DSM 10229 / NCIMB 13809 / X14).